Here is an 887-residue protein sequence, read N- to C-terminus: DNA gyrase subunit A (887 aa).

The region spanning 35–501 is the Topo IIA-type catalytic domain; that stretch reads LPDVRDGLKP…GFENLEDEDL (467 aa). Catalysis depends on Tyr-123, which acts as the O-(5'-phospho-DNA)-tyrosine intermediate. The short motif at 528 to 534 is the GyrA-box element; that stretch reads QNRGGRG. Positions 811-864 are disordered; that stretch reads KEDAEDETNEDEQSTSTVSEDGTEQQREAVVNDETPGNAIHTEVIDSEENDEDG. Acidic residues predominate over residues 813–823; that stretch reads DAEDETNEDEQ.

It belongs to the type II topoisomerase GyrA/ParC subunit family. Heterotetramer, composed of two GyrA and two GyrB chains. In the heterotetramer, GyrA contains the active site tyrosine that forms a transient covalent intermediate with DNA, while GyrB binds cofactors and catalyzes ATP hydrolysis.

It is found in the cytoplasm. The enzyme catalyses ATP-dependent breakage, passage and rejoining of double-stranded DNA.. In terms of biological role, a type II topoisomerase that negatively supercoils closed circular double-stranded (ds) DNA in an ATP-dependent manner to modulate DNA topology and maintain chromosomes in an underwound state. Negative supercoiling favors strand separation, and DNA replication, transcription, recombination and repair, all of which involve strand separation. Also able to catalyze the interconversion of other topological isomers of dsDNA rings, including catenanes and knotted rings. Type II topoisomerases break and join 2 DNA strands simultaneously in an ATP-dependent manner. The chain is DNA gyrase subunit A from Staphylococcus aureus (strain COL).